The following is a 295-amino-acid chain: Putative NADH-ubiquinone oxidoreductase MJ0520 (295 aa).

The next 8 helical transmembrane spans lie at 8–28, 69–89, 129–149, 163–183, 199–219, 220–240, 243–263, and 273–293; these read LIGA…LLGL, LYIF…IIAI, VFSA…YLTT, IHGS…ILLV, IVSG…YIAE, AIAY…PLVI, PVLT…VNGL, and VMLQ…RLIV.

This sequence belongs to the complex I subunit 1 family.

The protein resides in the cell membrane. It catalyses the reaction a ubiquinone + NADH + 5 H(+)(in) = a ubiquinol + NAD(+) + 4 H(+)(out). The protein is Putative NADH-ubiquinone oxidoreductase MJ0520 of Methanocaldococcus jannaschii (strain ATCC 43067 / DSM 2661 / JAL-1 / JCM 10045 / NBRC 100440) (Methanococcus jannaschii).